We begin with the raw amino-acid sequence, 424 residues long: Elongation factor 1-alpha (424 aa).

The 219-residue stretch at 5-223 (KPHMNLVIIG…NALQVPAKPV (219 aa)) folds into the tr-type G domain. Positions 14-21 (GHVDHGKS) are G1. A GTP-binding site is contributed by 14-21 (GHVDHGKS). Ser-21 serves as a coordination point for Mg(2+). Positions 70–74 (GVTID) are G2. Residues 91-94 (DAPG) are G3. Residues 91 to 95 (DAPGH) and 148 to 151 (NKMD) each bind GTP. The segment at 148-151 (NKMD) is G4. Residues 187–189 (SGY) form a G5 region.

This sequence belongs to the TRAFAC class translation factor GTPase superfamily. Classic translation factor GTPase family. EF-Tu/EF-1A subfamily.

Its subcellular location is the cytoplasm. It catalyses the reaction GTP + H2O = GDP + phosphate + H(+). GTP hydrolase that promotes the GTP-dependent binding of aminoacyl-tRNA to the A-site of ribosomes during protein biosynthesis. In Picrophilus torridus (strain ATCC 700027 / DSM 9790 / JCM 10055 / NBRC 100828 / KAW 2/3), this protein is Elongation factor 1-alpha.